A 403-amino-acid polypeptide reads, in one-letter code: GPI mannosyltransferase 1 (403 aa).

The Cytoplasmic segment spans residues 1 to 4; it reads MTGE. A helical membrane pass occupies residues 5–25; that stretch reads EWGLTVLSFLVRVGFFLFGIY. Over 26–78 the chain is Lumenal; it reads QDANFKVRYTDIDYFVFHDAAKYVYEGKSPYARDTYRYTPLLSWLLVPNHYFG. The helical transmembrane segment at 79–99 threads the bilayer; the sequence is WFHLGKVIFVIFDLVTGLIIM. At 100–110 the chain is on the cytoplasmic side; that stretch reads KLLNQAISRKR. Residues 111–131 traverse the membrane as a helical segment; it reads ALILESIWLLNPMVITISTRG. Position 132 (asparagine 132) is a topological domain, lumenal. A helical membrane pass occupies residues 133–149; that stretch reads AESVLCCLIMFTLFFLQ. At 150-160 the chain is on the cytoplasmic side; it reads KSRYTLAGILY. A helical membrane pass occupies residues 161–181; it reads GLSIHFKIYPIIYCIPIAIFI. Topologically, residues 182 to 193 are lumenal; that stretch reads YYNKRNQGPRTQ. The helical transmembrane segment at 194 to 214 threads the bilayer; that stretch reads LTSLLNIGLSTLTTLLGCGWA. Residues 215 to 266 lie on the Cytoplasmic side of the membrane; the sequence is MYKIYGYEFLDQAYLYHLYRTDHRHNFSVWNMLLYLDSANKENGESNLSRYA. Residues 267–287 form a helical membrane-spanning segment; that stretch reads FVPQLLLVLVTGCLEWWNPTF. At 288–310 the chain is on the lumenal side; sequence DNLLRVLFVQTFAFVTYNKVCTS. The chain crosses the membrane as a helical span at residues 311 to 331; the sequence is QYFVWYLIFLPFYLSRTHIGW. Residues 332-334 are Cytoplasmic-facing; it reads KKG. The chain crosses the membrane as a helical span at residues 335 to 355; it reads LLMATLWVGTQGIWLSQGYYL. At 356–361 the chain is on the lumenal side; the sequence is EFEGKN. Residues 362 to 382 traverse the membrane as a helical segment; it reads VFYPGLFIASVLFFVTNVWLL. The Cytoplasmic portion of the chain corresponds to 383-403; the sequence is GQFITDIKIPTQPTVSNKKNN.

It belongs to the PIGM family.

Its subcellular location is the endoplasmic reticulum membrane. It functions in the pathway glycolipid biosynthesis; glycosylphosphatidylinositol-anchor biosynthesis. In terms of biological role, mannosyltransferase involved in glycosylphosphatidylinositol-anchor biosynthesis. Transfers the first alpha-1,4-mannose to GlcN-acyl-PI during GPI precursor assembly. Required for cell wall integrity. This Saccharomyces cerevisiae (strain ATCC 204508 / S288c) (Baker's yeast) protein is GPI mannosyltransferase 1 (GPI14).